The primary structure comprises 273 residues: Karrikin insensitive 2 receptor B (273 aa).

Catalysis depends on Ser95, which acts as the Nucleophile. Asp217 is a catalytic residue.

Belongs to the AB hydrolase superfamily. In terms of tissue distribution, expressed in stigma.

The protein localises to the nucleus. It localises to the cytoplasm. Functionally, may be involved in plant olfaction during volatile communication. This chain is Karrikin insensitive 2 receptor B, found in Petunia hybrida (Petunia).